The sequence spans 127 residues: Class I hydrophobin 1 (127 aa).

The first 20 residues, 1–20 (MLSLLSKAVSLAILVTAVVA), serve as a signal peptide directing secretion. 4 disulfide bridges follow: cysteine 53–cysteine 108, cysteine 60–cysteine 102, cysteine 61–cysteine 94, and cysteine 109–cysteine 122. An N-linked (GlcNAc...) asparagine glycan is attached at asparagine 66.

Belongs to the fungal hydrophobin family. Self-assembles to form functional amyloid fibrils called rodlets. Self-assembly into fibrillar rodlets occurs spontaneously at hydrophobic:hydrophilic interfaces and the rodlets further associate laterally to form amphipathic monolayers. As to expression, expressed everywhere in the mycelial tissues of developing fruiting bodies except for the top parts of the pileus (cap) and for the prehymenophore; but high level of the transcript is detected in the parts surrounding the prehymenophore.

Its subcellular location is the secreted. It is found in the cell wall. Functionally, aerial growth, conidiation, and dispersal of filamentous fungi in the environment rely upon a capability of their secreting small amphipathic proteins called hydrophobins (HPBs) with low sequence identity. Class I can self-assemble into an outermost layer of rodlet bundles on aerial cell surfaces, conferring cellular hydrophobicity that supports fungal growth, development and dispersal; whereas Class II form highly ordered films at water-air interfaces through intermolecular interactions but contribute nothing to the rodlet structure. Hyd1 is a class I hydrophobin that plays a role in fruiting body initiation rather than in mature fruit body maintenance. Seems to be involved in the formation in the extracellular matrix of lined air channels with a hydrophobic membrane. These channels may help to provide gas exchange during respiration in mycelial tissues of developing fruiting bodies and are formed all over the mycelial tissues of these developing fruiting bodies except for the top parts of the pileus (cap) and for the prehymenophore. This is Class I hydrophobin 1 from Lentinula edodes (Shiitake mushroom).